A 276-amino-acid polypeptide reads, in one-letter code: Large ribosomal subunit protein uL2 (276 aa).

Disordered regions lie at residues 1–20 (MGIKKYNPTTNGRRNMTTND) and 219–276 (TVRG…RRKK). Polar residues predominate over residues 7-20 (NPTTNGRRNMTTND).

This sequence belongs to the universal ribosomal protein uL2 family. As to quaternary structure, part of the 50S ribosomal subunit. Forms a bridge to the 30S subunit in the 70S ribosome.

In terms of biological role, one of the primary rRNA binding proteins. Required for association of the 30S and 50S subunits to form the 70S ribosome, for tRNA binding and peptide bond formation. It has been suggested to have peptidyltransferase activity; this is somewhat controversial. Makes several contacts with the 16S rRNA in the 70S ribosome. The sequence is that of Large ribosomal subunit protein uL2 from Bacillus anthracis (strain A0248).